We begin with the raw amino-acid sequence, 1359 residues long: ABC transporter C family member 1 (1359 aa).

Positions 111 to 394 constitute an ABC transmembrane type-1 1 domain; it reads NKLTIFLQIL…LPNSIQQLQS (284 aa). The next 6 membrane-spanning stretches (helical) occupy residues 119–139, 147–167, 214–234, 244–264, 332–352, and 363–383; these read ILTNILSILSPLSLKYFIQFI, SFLAGIGYCILLLIASFSYTF, LLSVDVGIISNFFWIEHMGIF, LALLCWVIGWSGLVGFAIMVI, MIFWIFAEMMKQAVNAIVLVL, and ITLEVAFTTISIFVSLRIPLL. Positions 409–478 are disordered; that stretch reads PEIQQNHSSN…QQQQQQQQQQ (70 aa). Positions 420–433 are enriched in acidic residues; that stretch reads EEEEEDEYDDDINS. Positions 440-450 are enriched in polar residues; that stretch reads HNGSFNWNQVD. Residues 459-478 are compositionally biased toward low complexity; it reads GNQQQQQQQQQQQQQQQQQQ. One can recognise an ABC transporter 1 domain in the interval 470–690; it reads QQQQQQQQQQ…IDFESIMKTK (221 aa). 502–509 contributes to the ATP binding site; the sequence is GVVGSGKT. Residues 763 to 1061 enclose the ABC transmembrane type-1 2 domain; the sequence is LRVYKEYFKH…LEVKMNSVER (299 aa). The next 5 helical transmembrane spans lie at 773–793, 819–839, 884–904, 906–926, and 999–1021; these read GSSIPLFIMTCIVYMISQIIY, IYLLFIVGFIIFLVIRYFMMA, VDLLLFDLFSDVLYCGSTVLV, IGIMIYISPLIIIPFLLLIGI, and WVAVRLEFISSIVVFLAAFFSLF. Residues 1073–1102 adopt a coiled-coil conformation; sequence NSKINFFRNEQQEEEEEEEEEFDFDNDDYD. The 235-residue stretch at 1116 to 1350 folds into the ABC transporter 2 domain; the sequence is IEFRNVEIKY…QESRFSKLVK (235 aa). 1150–1157 provides a ligand contact to ATP; that stretch reads GRTGAGKS.

This sequence belongs to the ABC transporter superfamily. ABCC family. Conjugate transporter (TC 3.A.1.208) subfamily.

The protein localises to the membrane. This is ABC transporter C family member 1 (abcC1) from Dictyostelium discoideum (Social amoeba).